Reading from the N-terminus, the 708-residue chain is Matrix metalloproteinase-9 (708 aa).

A signal peptide spans 1–19; sequence MSPWQPLLLVLLALGYSFA. Residues 20–107 constitute a propeptide, activation peptide; the sequence is APHQRQPTYV…PRCGVPDVGK (88 aa). Asn-39 carries N-linked (GlcNAc...) asparagine glycosylation. A Cysteine switch motif is present at residues 98–105; the sequence is PRCGVPDV. Cys-100 lines the Zn(2+) pocket. N-linked (GlcNAc...) asparagine glycosylation is present at Asn-121. Ca(2+) is bound by residues Asp-132 and Asp-166. 2 residues coordinate Zn(2+): His-176 and Asp-178. Ca(2+)-binding residues include Asp-183, Gly-184, Asp-186, and Leu-188. Zn(2+) is bound at residue His-191. Residues Gly-198, Gln-200, and Asp-202 each contribute to the Ca(2+) site. Zn(2+) is bound at residue His-204. Ca(2+) is bound by residues Asp-206, Asp-207, and Glu-209. 3 Fibronectin type-II domains span residues 226–274, 284–332, and 343–391; these read ANGA…FCPS, GDGK…FCPT, and SAGE…FCPD. 6 cysteine pairs are disulfide-bonded: Cys-231–Cys-257, Cys-245–Cys-272, Cys-289–Cys-315, Cys-303–Cys-330, Cys-348–Cys-374, and Cys-362–Cys-389. A Zn(2+)-binding site is contributed by His-402. Glu-403 is an active-site residue. Zn(2+) contacts are provided by His-406 and His-412. Residues 441-520 are disordered; the sequence is HHLYGRGSKP…SSTPDDNPCN (80 aa). Residues 480-490 show a composition bias toward low complexity; that stretch reads PTGGPTVAPTG. Over residues 491-502 the composition is skewed to pro residues; that stretch reads APSPGPTGPPTA. Cysteines 519 and 707 form a disulfide. Hemopexin repeat units follow at residues 521 to 566, 567 to 611, 613 to 660, and 661 to 707; these read VDVF…WPAF, PSKL…GLGS, VTLV…FSGV, and PWNS…LLQC.

It belongs to the peptidase M10A family. In terms of assembly, exists as monomer or homodimer; disulfide-linked. Also exists as heterodimer with LCN2. Macrophages and transformed cell lines produce only the monomeric form. Interacts with ECM1. Requires Zn(2+) as cofactor. It depends on Ca(2+) as a cofactor. Post-translationally, N- and O-glycosylated.

It localises to the secreted. The protein resides in the extracellular space. The protein localises to the extracellular matrix. It catalyses the reaction Cleavage of gelatin types I and V and collagen types IV and V.. Matrix metalloproteinase that plays an essential role in local proteolysis of the extracellular matrix and in leukocyte migration. Could play a role in bone osteoclastic resorption. Cleaves KiSS1 at a Gly-|-Leu bond. Cleaves NINJ1 to generate the Secreted ninjurin-1 form. Cleaves type IV and type V collagen into large C-terminal three quarter fragments and shorter N-terminal one quarter fragments. Degrades fibronectin but not laminin or Pz-peptide. This Rattus norvegicus (Rat) protein is Matrix metalloproteinase-9 (Mmp9).